The chain runs to 100 residues: NAD(P)H-quinone oxidoreductase subunit 4L, chloroplastic (100 aa).

3 helical membrane passes run 1–21, 31–51, and 63–83; these read MLEH…YGLV, MCLE…SNFF, and IFVI…VLAI.

Belongs to the complex I subunit 4L family. NDH is composed of at least 16 different subunits, 5 of which are encoded in the nucleus.

The protein localises to the plastid. The protein resides in the chloroplast thylakoid membrane. The catalysed reaction is a plastoquinone + NADH + (n+1) H(+)(in) = a plastoquinol + NAD(+) + n H(+)(out). The enzyme catalyses a plastoquinone + NADPH + (n+1) H(+)(in) = a plastoquinol + NADP(+) + n H(+)(out). Functionally, NDH shuttles electrons from NAD(P)H:plastoquinone, via FMN and iron-sulfur (Fe-S) centers, to quinones in the photosynthetic chain and possibly in a chloroplast respiratory chain. The immediate electron acceptor for the enzyme in this species is believed to be plastoquinone. Couples the redox reaction to proton translocation, and thus conserves the redox energy in a proton gradient. This is NAD(P)H-quinone oxidoreductase subunit 4L, chloroplastic from Cryptomeria japonica (Japanese cedar).